A 247-amino-acid chain; its full sequence is Ubiquinone biosynthesis O-methyltransferase (247 aa).

Arg-45, Gly-65, Asp-86, and Leu-130 together coordinate S-adenosyl-L-methionine.

This sequence belongs to the methyltransferase superfamily. UbiG/COQ3 family.

It catalyses the reaction a 3-demethylubiquinol + S-adenosyl-L-methionine = a ubiquinol + S-adenosyl-L-homocysteine + H(+). It carries out the reaction a 3-(all-trans-polyprenyl)benzene-1,2-diol + S-adenosyl-L-methionine = a 2-methoxy-6-(all-trans-polyprenyl)phenol + S-adenosyl-L-homocysteine + H(+). The protein operates within cofactor biosynthesis; ubiquinone biosynthesis. In terms of biological role, O-methyltransferase that catalyzes the 2 O-methylation steps in the ubiquinone biosynthetic pathway. This is Ubiquinone biosynthesis O-methyltransferase from Alkalilimnicola ehrlichii (strain ATCC BAA-1101 / DSM 17681 / MLHE-1).